The primary structure comprises 456 residues: Exodeoxyribonuclease 7 large subunit (456 aa).

It belongs to the XseA family. In terms of assembly, heterooligomer composed of large and small subunits.

Its subcellular location is the cytoplasm. The enzyme catalyses Exonucleolytic cleavage in either 5'- to 3'- or 3'- to 5'-direction to yield nucleoside 5'-phosphates.. Functionally, bidirectionally degrades single-stranded DNA into large acid-insoluble oligonucleotides, which are then degraded further into small acid-soluble oligonucleotides. This is Exodeoxyribonuclease 7 large subunit from Lactobacillus gasseri (strain ATCC 33323 / DSM 20243 / BCRC 14619 / CIP 102991 / JCM 1131 / KCTC 3163 / NCIMB 11718 / NCTC 13722 / AM63).